Reading from the N-terminus, the 694-residue chain is Polyribonucleotide nucleotidyltransferase (694 aa).

Positions 485 and 491 each coordinate Mg(2+). A KH domain is found at 552-611 (PRIETMQIKPNKIATVIGPGGKQIRQIIEEAGVQIDINDSGLVSISASSPQAIEKAKSII). Residues 621-689 (GKIYEGRVTS…EKGQYKLSHK (69 aa)) enclose the S1 motif domain.

This sequence belongs to the polyribonucleotide nucleotidyltransferase family. It depends on Mg(2+) as a cofactor.

It localises to the cytoplasm. It carries out the reaction RNA(n+1) + phosphate = RNA(n) + a ribonucleoside 5'-diphosphate. In terms of biological role, involved in mRNA degradation. Catalyzes the phosphorolysis of single-stranded polyribonucleotides processively in the 3'- to 5'-direction. The chain is Polyribonucleotide nucleotidyltransferase from Chlamydia felis (strain Fe/C-56) (Chlamydophila felis).